Consider the following 266-residue polypeptide: Metallo-beta-lactamase domain-containing protein 1 (266 aa).

The interval 48–71 (LPQTRGPASSHRESPRGSGGAEAA) is disordered. Residues histidine 114, histidine 116, aspartate 118, histidine 119, histidine 169, aspartate 192, and histidine 231 each contribute to the Zn(2+) site. The segment at 229–266 (PGHGPPFRVLREASQPETEGGGNSQQEPVVGDEEPALH) is disordered.

It belongs to the metallo-beta-lactamase superfamily. Glyoxalase II family. In terms of assembly, homodimer. The cofactor is Zn(2+).

It localises to the cytoplasm. The protein resides in the cytosol. Its subcellular location is the nucleus. It carries out the reaction a ribonucleotidyl-ribonucleotide-RNA + H2O = a 3'-end ribonucleotide-RNA + a 5'-end 5'-phospho-ribonucleoside-RNA + H(+). Functionally, endoribonuclease that catalyzes the hydrolysis of histone-coding pre-mRNA 3'-end. Involved in histone pre-mRNA processing during the S-phase of the cell cycle, which is required for entering/progressing through S-phase. Cleaves histone pre-mRNA at a major and a minor cleavage site after the 5'-ACCCA-3' and the 5'-ACCCACA-3' sequence, respectively, and located downstream of the stem-loop. May require the presence of the HDE element located at the histone pre-RNA 3'-end to avoid non-specific cleavage. The protein is Metallo-beta-lactamase domain-containing protein 1 of Homo sapiens (Human).